The chain runs to 410 residues: Cytosolic isocitrate dehydrogenase [NADP] (410 aa).

NADP(+)-binding positions include threonine 77–threonine 79 and arginine 84. Threonine 79 is a binding site for substrate. Substrate contacts are provided by residues serine 96–arginine 102, arginine 111, and arginine 134. Lysine 260 provides a ligand contact to NADP(+). Positions 275 and 279 each coordinate Mn(2+). NADP(+)-binding positions include glycine 310–histidine 315 and asparagine 328.

The protein belongs to the isocitrate and isopropylmalate dehydrogenases family. It depends on Mg(2+) as a cofactor. Mn(2+) serves as cofactor.

The protein localises to the cytoplasm. Its subcellular location is the cytosol. The catalysed reaction is D-threo-isocitrate + NADP(+) = 2-oxoglutarate + CO2 + NADPH. Its function is as follows. May supply 2-oxoglutarate for amino acid biosynthesis and ammonia assimilation via the glutamine synthetase/glutamate synthase (GS/GOGAT) pathway. May be involved in the production of NADPH to promote redox signaling or homeostasis in response to oxidative stress, or redox signaling linked to defense responses. This chain is Cytosolic isocitrate dehydrogenase [NADP], found in Arabidopsis thaliana (Mouse-ear cress).